Here is a 307-residue protein sequence, read N- to C-terminus: tRNA dimethylallyltransferase (307 aa).

Residue 9 to 16 (GPTAVGKT) participates in ATP binding. Residue 11–16 (TAVGKT) participates in substrate binding. Residues 34 to 37 (DSMQ) are interaction with substrate tRNA.

The protein belongs to the IPP transferase family. As to quaternary structure, monomer. It depends on Mg(2+) as a cofactor.

It catalyses the reaction adenosine(37) in tRNA + dimethylallyl diphosphate = N(6)-dimethylallyladenosine(37) in tRNA + diphosphate. Functionally, catalyzes the transfer of a dimethylallyl group onto the adenine at position 37 in tRNAs that read codons beginning with uridine, leading to the formation of N6-(dimethylallyl)adenosine (i(6)A). The protein is tRNA dimethylallyltransferase of Levilactobacillus brevis (strain ATCC 367 / BCRC 12310 / CIP 105137 / JCM 1170 / LMG 11437 / NCIMB 947 / NCTC 947) (Lactobacillus brevis).